The chain runs to 164 residues: Protein SprT (164 aa).

In terms of domain architecture, SprT-like spans 14–156 (QLAESFFKRP…LCRRCRQTLV (143 aa)). A Zn(2+)-binding site is contributed by H69. The active site involves E70. H73 is a Zn(2+) binding site.

This sequence belongs to the SprT family. The cofactor is Zn(2+).

Its subcellular location is the cytoplasm. The polypeptide is Protein SprT (Pseudomonas fluorescens (strain ATCC BAA-477 / NRRL B-23932 / Pf-5)).